The primary structure comprises 219 residues: uncharacterized protein (219 aa).

Basic and acidic residues-rich tracts occupy residues 1–20, 30–39, and 156–170; these read METPIEREIRRSCEREESLR, AGRELVELRV, and QEVRAVREREQELQR. The tract at residues 1-195 is disordered; sequence METPIEREIR…PSLTASRGDG (195 aa).

It belongs to the MISP family.

This is an uncharacterized protein from Homo sapiens (Human).